The primary structure comprises 238 residues: Probable transcriptional regulatory protein Mmwyl1_2868 (238 aa).

It belongs to the TACO1 family.

The protein localises to the cytoplasm. This chain is Probable transcriptional regulatory protein Mmwyl1_2868, found in Marinomonas sp. (strain MWYL1).